The primary structure comprises 465 residues: MAP kinase-interacting serine/threonine-protein kinase 1 (465 aa).

Positions 1–11 (MVSSQKLEKPI) are enriched in basic and acidic residues. The disordered stretch occupies residues 1-40 (MVSSQKLEKPIEMGSSEPLPIADGDRRRKKKRRGRATDSL). Phosphoserine is present on S39. One can recognise a Protein kinase domain in the interval 49–374 (KLTSELLGEG…AAQVLQHPWV (326 aa)). ATP contacts are provided by residues 55–63 (LGEGAYAKV) and K78. Polar residues predominate over residues 185 to 203 (APTSLGSSDPPTSASQVAG). Residues 185 to 204 (APTSLGSSDPPTSASQVAGT) form a disordered region. Catalysis depends on D211, which acts as the Proton acceptor. A phosphoserine mark is found at S221 and S226. Phosphothreonine occurs at positions 250, 255, and 385. Positions 446-465 (RRRALAQAGRGEDRSPPTAL) are disordered. Over residues 455–465 (RGEDRSPPTAL) the composition is skewed to basic and acidic residues. S460 carries the phosphoserine modification.

It belongs to the protein kinase superfamily. CAMK Ser/Thr protein kinase family. Interacts with the C-terminal regions of EIF4G1 and EIF4G2. Also binds to dephosphorylated ERK1 and ERK2, and to the p38 kinases. Mg(2+) serves as cofactor. Dual phosphorylation of Thr-250 and Thr-255 activates the kinase. Phosphorylation of Thr-385 activates the kinase. MAPK3/ERK1 is one of the kinases which activate MKNK1/MNK1. Phosphorylation by PAK2 leads to a reduced phosphorylation of EIF4G1. In terms of tissue distribution, ubiquitous.

It localises to the cytoplasm. Its subcellular location is the nucleus. The enzyme catalyses L-seryl-[protein] + ATP = O-phospho-L-seryl-[protein] + ADP + H(+). It catalyses the reaction L-threonyl-[protein] + ATP = O-phospho-L-threonyl-[protein] + ADP + H(+). With respect to regulation, phosphorylated and activated by the p38 kinases and kinases in the Erk pathway. Its function is as follows. May play a role in the response to environmental stress and cytokines. Appears to regulate translation by phosphorylating EIF4E, thus increasing the affinity of this protein for the 7-methylguanosine-containing mRNA cap. The sequence is that of MAP kinase-interacting serine/threonine-protein kinase 1 (MKNK1) from Homo sapiens (Human).